A 270-amino-acid polypeptide reads, in one-letter code: NAD kinase (270 aa).

Asp-63 functions as the Proton acceptor in the catalytic mechanism. NAD(+)-binding positions include 63-64 (DG), Arg-68, 131-132 (NE), Lys-142, Arg-159, Asp-161, 172-177 (TAYAMS), Ala-196, and Gln-230.

This sequence belongs to the NAD kinase family. A divalent metal cation is required as a cofactor.

It is found in the cytoplasm. The enzyme catalyses NAD(+) + ATP = ADP + NADP(+) + H(+). Involved in the regulation of the intracellular balance of NAD and NADP, and is a key enzyme in the biosynthesis of NADP. Catalyzes specifically the phosphorylation on 2'-hydroxyl of the adenosine moiety of NAD to yield NADP. The sequence is that of NAD kinase from Methanoregula boonei (strain DSM 21154 / JCM 14090 / 6A8).